The chain runs to 574 residues: Eukaryotic translation initiation factor 3 subunit D (574 aa).

A disordered region spans residues 153–178; it reads QRRGGNARQGQRGQGGRFGGDRPKER. Residues 154-163 show a composition bias toward low complexity; it reads RRGGNARQGQ. An RNA gate region spans residues 312-326; the sequence is PVETLTVSETSAEPP. A disordered region spans residues 555-574; it reads EGTFDSERESSEEENSDDDQ. The segment covering 564–574 has biased composition (acidic residues); that stretch reads SSEEENSDDDQ.

This sequence belongs to the eIF-3 subunit D family. In terms of assembly, component of the eukaryotic translation initiation factor 3 (eIF-3) complex.

The protein resides in the cytoplasm. Its function is as follows. mRNA cap-binding component of the eukaryotic translation initiation factor 3 (eIF-3) complex, which is involved in protein synthesis of a specialized repertoire of mRNAs and, together with other initiation factors, stimulates binding of mRNA and methionyl-tRNAi to the 40S ribosome. The eIF-3 complex specifically targets and initiates translation of a subset of mRNAs involved in cell proliferation. In the eIF-3 complex, eif3d specifically recognizes and binds the 7-methylguanosine cap of a subset of mRNAs. This Caenorhabditis briggsae protein is Eukaryotic translation initiation factor 3 subunit D.